The sequence spans 514 residues: MKTLSQLVFNNTYSELPTTFGTAVIPQPLSDPFLVSVNPQVAEMLELDPLEAKTRLFINSFTGNKELAGTAPLAMKYTGHQFGHYNPDLGDGRGLLLGEVLTSTNAKWDIHLKGSGKTPYSRQGDGRAVLRSSIREYLGSAALNGLGIKTTHALALLGSTTLVSREKMERGATLIRVAESHLRFGHFEYLFYTHQHSELKLLADYLIKHHFPDLLTTESEQEDKQTASPNQHHNIYASMLTRIVELTAQLIAGWQSVGFAHGVMNTDNMSVLGLTFDYGPFGFLDDYNPDYICNHSDYSGRYAFNQQPSIALWNLSALGYALTPLIDKEDVDAILNRYHLTLQRDYSARMRNKLGLIEKREEDTVLFSSLFELLQSQMVDYTLFFRTLSSISATDLSVTSLPNSIERFDDLFTCTQPLEKWLKAYAVRLSFENDTSEKNGDTLRLTQMKLHNPKYILRNYLAQQAIDKAEDGDFTMIDELLQVLSSPFDEHLEFNQFADKPPYWGKKLEISCSS.

Gly-90, Gly-92, Arg-93, Lys-113, Asp-125, Gly-126, Arg-176, and Arg-183 together coordinate ATP. The active-site Proton acceptor is the Asp-267. The Mg(2+) site is built by Asn-268 and Asp-277. Asp-277 provides a ligand contact to ATP.

This sequence belongs to the SELO family. Mg(2+) is required as a cofactor. The cofactor is Mn(2+).

The enzyme catalyses L-seryl-[protein] + ATP = 3-O-(5'-adenylyl)-L-seryl-[protein] + diphosphate. It catalyses the reaction L-threonyl-[protein] + ATP = 3-O-(5'-adenylyl)-L-threonyl-[protein] + diphosphate. It carries out the reaction L-tyrosyl-[protein] + ATP = O-(5'-adenylyl)-L-tyrosyl-[protein] + diphosphate. The catalysed reaction is L-histidyl-[protein] + UTP = N(tele)-(5'-uridylyl)-L-histidyl-[protein] + diphosphate. The enzyme catalyses L-seryl-[protein] + UTP = O-(5'-uridylyl)-L-seryl-[protein] + diphosphate. It catalyses the reaction L-tyrosyl-[protein] + UTP = O-(5'-uridylyl)-L-tyrosyl-[protein] + diphosphate. Functionally, nucleotidyltransferase involved in the post-translational modification of proteins. It can catalyze the addition of adenosine monophosphate (AMP) or uridine monophosphate (UMP) to a protein, resulting in modifications known as AMPylation and UMPylation. This chain is Protein nucleotidyltransferase YdiU, found in Photobacterium profundum (strain SS9).